The sequence spans 768 residues: MGKKDRQRKKLREFAKLKNRQRNLRKSVQTLKNEVQREAKVPRTSNQIALGNDKIEEINENSPLLSAPSKQEEVSIPKAVDIDTIDAQPLHEGPKIDDSPQDEVNSIKGKPADKANEDDLKPPSQHEACGNSALQSSITDFSDRSVSPLQSITSCNTPMSEHELPVSSSNSFERADDMPVVQADNQTSSSKSLHIVAPSPEVPVSGDEITSYGYGSIPQSIGDVENGLNPPYVENTSSDELVHDLTRRRIFSSCMCTYLFFIAMDSSIILVIASKIASEFHELWRLSLVISAYLLSNAIGQLVFLKLSLISSVKLLLCIAQFSFILGGYLSWSSAHFWTFIFARCVTGFGGGSLIALKSTIMNRFSQKNDSRYSLSASMITFAMGVVIGPFMMNLFDSSHGSGWRNAFLIPVPFCLVNASIMLADMYSVKSTLYGRPTPTLWKRFKNTLLSPDLYEILTLTLFLLCFVQVTSLDLTGLKNNTMIQALLFSVIIVCGILFFLIETSDTYMNSVISMSLQGDKRLIWTMIGISFCFAALMCIIPFGTTYFIIVLNLSTLQLAERLSPFFFSIVLGYFSVSYFWKSKGQNFLLKFVLSGATLLLYVALMGVSLNLPVWKQYICLSLPFLGSSMILTLLSNLYHEYHEQRKSPISGSIVYCFGAVGGTVGISLGGYVFHKTLIKLMHEKVMPFSKQGYLKKDLLKIIKHATESSDWVHESAPKFVFQTLIECYLQACRNVFKLSTLFFTITVVAIFIFNRIHCRSQNCLSLS.

At Met1–Ser252 the chain is on the cytoplasmic side. Residues Lys9 to Lys40 adopt a coiled-coil conformation. The interval Glu34–Phe172 is disordered. 3 positions are modified to phosphoserine: Ser62, Ser99, and Ser106. Over residues Lys110 to Lys121 the composition is skewed to basic and acidic residues. Residues Ser132–Met159 are compositionally biased toward polar residues. 2 positions are modified to phosphoserine: Ser160 and Ser192. A helical membrane pass occupies residues Ser253–Ala273. Residues Ser274–Glu282 lie on the Vacuolar side of the membrane. The chain crosses the membrane as a helical span at residues Leu283 to Leu305. The Cytoplasmic segment spans residues Lys306–Ser311. A helical membrane pass occupies residues Ser312 to Ser331. Residues Trp332–Ser334 are Vacuolar-facing. A helical membrane pass occupies residues Ala335 to Leu357. Over Lys358–Leu375 the chain is Cytoplasmic. The chain crosses the membrane as a helical span at residues Ser376–Phe396. Topologically, residues Asp397 to Asn406 are vacuolar. A helical membrane pass occupies residues Ala407–Tyr427. Over Ser428–Asn447 the chain is Cytoplasmic. Residues Thr448–Val468 traverse the membrane as a helical segment. The Vacuolar portion of the chain corresponds to Gln469 to Asn481. N-linked (GlcNAc...) asparagine glycosylation occurs at Asn480. The helical transmembrane segment at Thr482 to Ile502 threads the bilayer. Over Glu503–Arg522 the chain is Cytoplasmic. A helical transmembrane segment spans residues Leu523–Phe543. Topologically, residues Gly544–Arg562 are vacuolar. Asn553 carries N-linked (GlcNAc...) asparagine glycosylation. Residues Leu563–Ser583 form a helical membrane-spanning segment. The Cytoplasmic portion of the chain corresponds to Lys584 to Asn587. Residues Phe588 to Val608 form a helical membrane-spanning segment. Residues Ser609–Gln617 are Vacuolar-facing. The helical transmembrane segment at Tyr618–Leu638 threads the bilayer. At Tyr639–Ser653 the chain is on the cytoplasmic side. The chain crosses the membrane as a helical span at residues Ile654 to Phe674. Residues His675–Arg734 are Vacuolar-facing. The helical transmembrane segment at Asn735 to Asn755 threads the bilayer. Topologically, residues Arg756–Ser768 are cytoplasmic.

This sequence belongs to the major facilitator superfamily.

It is found in the vacuole membrane. Its function is as follows. Transporter required for vacuolar uptake of basic amino acids. The sequence is that of Vacuolar basic amino acid transporter 4 (VBA4) from Saccharomyces cerevisiae (strain ATCC 204508 / S288c) (Baker's yeast).